A 235-amino-acid chain; its full sequence is Isoprenyl transferase (235 aa).

Aspartate 21 is a catalytic residue. Position 21 (aspartate 21) interacts with Mg(2+). Residues 22–25 (GNAR), tryptophan 26, lysine 34, histidine 38, and 66–68 (SSE) contribute to the substrate site. Asparagine 69 functions as the Proton acceptor in the catalytic mechanism. Substrate contacts are provided by residues tryptophan 70, arginine 72, arginine 183, and 189 to 191 (RIS). Residue glutamate 202 participates in Mg(2+) binding.

Belongs to the UPP synthase family. As to quaternary structure, homodimer. It depends on Mg(2+) as a cofactor.

Catalyzes the condensation of isopentenyl diphosphate (IPP) with allylic pyrophosphates generating different type of terpenoids. The protein is Isoprenyl transferase of Rickettsia felis (strain ATCC VR-1525 / URRWXCal2) (Rickettsia azadi).